The primary structure comprises 110 residues: Ribonuclease P protein component 1 (110 aa).

Belongs to the eukaryotic/archaeal RNase P protein component 1 family. As to quaternary structure, consists of a catalytic RNA component and at least 4-5 protein subunits.

The protein resides in the cytoplasm. It carries out the reaction Endonucleolytic cleavage of RNA, removing 5'-extranucleotides from tRNA precursor.. Part of ribonuclease P, a protein complex that generates mature tRNA molecules by cleaving their 5'-ends. This chain is Ribonuclease P protein component 1, found in Methanosarcina acetivorans (strain ATCC 35395 / DSM 2834 / JCM 12185 / C2A).